We begin with the raw amino-acid sequence, 176 residues long: Cytochrome b (176 aa).

3 helical membrane passes run 33–53 (FGSLLGICLTIQILTGLFLAM), 77–98 (WLLRYLHANGASMFFICLYLHV), and 113–133 (WNMGIILLFAVMATAFMGYVL). Heme b-binding residues include His-83 and His-97.

It belongs to the cytochrome b family. As to quaternary structure, the cytochrome bc1 complex contains 11 subunits: 3 respiratory subunits (MT-CYB, CYC1 and UQCRFS1), 2 core proteins (UQCRC1 and UQCRC2) and 6 low-molecular weight proteins (UQCRH/QCR6, UQCRB/QCR7, UQCRQ/QCR8, UQCR10/QCR9, UQCR11/QCR10 and a cleavage product of UQCRFS1). This cytochrome bc1 complex then forms a dimer. The cofactor is heme b.

It is found in the mitochondrion inner membrane. Functionally, component of the ubiquinol-cytochrome c reductase complex (complex III or cytochrome b-c1 complex) that is part of the mitochondrial respiratory chain. The b-c1 complex mediates electron transfer from ubiquinol to cytochrome c. Contributes to the generation of a proton gradient across the mitochondrial membrane that is then used for ATP synthesis. This Tomopeas ravum (Blunt-eared bat) protein is Cytochrome b (MT-CYB).